The following is a 389-amino-acid chain: Histidinol-phosphate aminotransferase (389 aa).

Lys-233 is modified (N6-(pyridoxal phosphate)lysine).

Belongs to the class-II pyridoxal-phosphate-dependent aminotransferase family. Pyridoxal 5'-phosphate serves as cofactor.

The enzyme catalyses L-histidinol phosphate + 2-oxoglutarate = 3-(imidazol-4-yl)-2-oxopropyl phosphate + L-glutamate. The protein operates within amino-acid biosynthesis; L-histidine biosynthesis; L-histidine from 5-phospho-alpha-D-ribose 1-diphosphate: step 7/9. The chain is Histidinol-phosphate aminotransferase (HIS5) from Candida maltosa (Yeast).